A 544-amino-acid chain; its full sequence is CTP synthase (544 aa).

The segment at 1-266 (MSTKFIFVTG…DYFVCRRFHL (266 aa)) is amidoligase domain. A CTP-binding site is contributed by serine 14. UTP is bound at residue serine 14. Residues 15–20 (SLGKGI) and aspartate 72 contribute to the ATP site. Residues aspartate 72 and glutamate 140 each contribute to the Mg(2+) site. Residues 147-149 (DIE), 187-192 (KTKPTQ), and lysine 223 contribute to the CTP site. UTP-binding positions include 187–192 (KTKPTQ) and lysine 223. The region spanning 291–542 (TIGMVGKYIE…VAAAHIHQKA (252 aa)) is the Glutamine amidotransferase type-1 domain. Residue glycine 352 participates in L-glutamine binding. Cysteine 379 acts as the Nucleophile; for glutamine hydrolysis in catalysis. L-glutamine-binding positions include 380-383 (LGMQ), glutamate 403, and arginine 470. Catalysis depends on residues histidine 515 and glutamate 517.

It belongs to the CTP synthase family. As to quaternary structure, homotetramer.

It carries out the reaction UTP + L-glutamine + ATP + H2O = CTP + L-glutamate + ADP + phosphate + 2 H(+). The catalysed reaction is L-glutamine + H2O = L-glutamate + NH4(+). The enzyme catalyses UTP + NH4(+) + ATP = CTP + ADP + phosphate + 2 H(+). It functions in the pathway pyrimidine metabolism; CTP biosynthesis via de novo pathway; CTP from UDP: step 2/2. Its activity is regulated as follows. Allosterically activated by GTP, when glutamine is the substrate; GTP has no effect on the reaction when ammonia is the substrate. The allosteric effector GTP functions by stabilizing the protein conformation that binds the tetrahedral intermediate(s) formed during glutamine hydrolysis. Inhibited by the product CTP, via allosteric rather than competitive inhibition. In terms of biological role, catalyzes the ATP-dependent amination of UTP to CTP with either L-glutamine or ammonia as the source of nitrogen. Regulates intracellular CTP levels through interactions with the four ribonucleotide triphosphates. The protein is CTP synthase of Pseudoalteromonas translucida (strain TAC 125).